Here is a 469-residue protein sequence, read N- to C-terminus: Adenosylhomocysteinase (469 aa).

Residues T60, D135, and E195 each coordinate substrate. 196 to 198 (TTT) serves as a coordination point for NAD(+). K225 and D229 together coordinate substrate. NAD(+) is bound by residues N230, 259-264 (GYGDVG), E282, N317, 338-340 (IGH), and N383.

The protein belongs to the adenosylhomocysteinase family. It depends on NAD(+) as a cofactor.

It is found in the cytoplasm. It catalyses the reaction S-adenosyl-L-homocysteine + H2O = L-homocysteine + adenosine. Its pathway is amino-acid biosynthesis; L-homocysteine biosynthesis; L-homocysteine from S-adenosyl-L-homocysteine: step 1/1. Its function is as follows. May play a key role in the regulation of the intracellular concentration of adenosylhomocysteine. In Hyphomonas neptunium (strain ATCC 15444), this protein is Adenosylhomocysteinase.